Reading from the N-terminus, the 193-residue chain is Peptidyl-tRNA hydrolase (193 aa).

A tRNA-binding site is contributed by H17. H22 functions as the Proton acceptor in the catalytic mechanism. F68, N70, and N116 together coordinate tRNA.

It belongs to the PTH family. Monomer.

The protein resides in the cytoplasm. It catalyses the reaction an N-acyl-L-alpha-aminoacyl-tRNA + H2O = an N-acyl-L-amino acid + a tRNA + H(+). Hydrolyzes ribosome-free peptidyl-tRNAs (with 1 or more amino acids incorporated), which drop off the ribosome during protein synthesis, or as a result of ribosome stalling. Functionally, catalyzes the release of premature peptidyl moieties from peptidyl-tRNA molecules trapped in stalled 50S ribosomal subunits, and thus maintains levels of free tRNAs and 50S ribosomes. The polypeptide is Peptidyl-tRNA hydrolase (Xanthomonas campestris pv. campestris (strain ATCC 33913 / DSM 3586 / NCPPB 528 / LMG 568 / P 25)).